A 133-amino-acid polypeptide reads, in one-letter code: MAYRKMLKSKIHRACVTQADLDYEGSITISPELLKVANILPYEAVNVWNITAGTRFETYAITGEKGSTDICVNGAAAHLVTPGDLVIIASFTQILEEDCAAHEPTVVFVDQFNRLKEIRPERIGVKSRIPYPA.

Ser-26 (schiff-base intermediate with substrate; via pyruvic acid) is an active-site residue. Residue Ser-26 is modified to Pyruvic acid (Ser). Thr-58 lines the substrate pocket. Catalysis depends on Tyr-59, which acts as the Proton donor. Residue 74–76 (GAA) participates in substrate binding.

This sequence belongs to the PanD family. Heterooctamer of four alpha and four beta subunits. It depends on pyruvate as a cofactor. Is synthesized initially as an inactive proenzyme, which is activated by self-cleavage at a specific serine bond to produce a beta-subunit with a hydroxyl group at its C-terminus and an alpha-subunit with a pyruvoyl group at its N-terminus.

Its subcellular location is the cytoplasm. The catalysed reaction is L-aspartate + H(+) = beta-alanine + CO2. It participates in cofactor biosynthesis; (R)-pantothenate biosynthesis; beta-alanine from L-aspartate: step 1/1. Catalyzes the pyruvoyl-dependent decarboxylation of aspartate to produce beta-alanine. This is Aspartate 1-decarboxylase from Legionella pneumophila (strain Paris).